The chain runs to 183 residues: uncharacterized protein (183 aa).

An SIS domain is found at 27–170 (MIKLIDSARS…VAEIMMQKHL (144 aa)).

Belongs to the SIS family. PHI subfamily.

This is an uncharacterized protein from Archaeoglobus fulgidus (strain ATCC 49558 / DSM 4304 / JCM 9628 / NBRC 100126 / VC-16).